Here is a 362-residue protein sequence, read N- to C-terminus: Outer mitochondrial transmembrane helix translocase (362 aa).

Residues 1–19 are Mitochondrial intermembrane-facing; that stretch reads MVLKEIPTENITRPLGRNE. A helical membrane pass occupies residues 20-42; it reads VIGLLFRLTIFGAVTYFTIKWMV. Residues 43 to 362 are Cytoplasmic-facing; sequence DAIDPTRKQK…HEAFMQVPLD (320 aa). 137-144 provides a ligand contact to ATP; sequence GPPGCGKT.

It belongs to the AAA ATPase family. MSP1 subfamily.

The protein localises to the mitochondrion outer membrane. It localises to the peroxisome membrane. The protein resides in the postsynaptic cell membrane. It carries out the reaction [protein]-with a C-terminal TM segment(out) + ATP + H2O = [protein]-with a C-terminal TM segment(in) + ADP + phosphate + H(+). Its function is as follows. Outer mitochondrial translocase required to remove mislocalized tail-anchored transmembrane proteins on mitochondria. Specifically recognizes and binds tail-anchored transmembrane proteins: acts as a dislocase that mediates the ATP-dependent extraction of mistargeted tail-anchored transmembrane proteins from the mitochondrion outer membrane. Also plays a critical role in regulating the surface expression of AMPA receptors (AMPAR), thereby regulating synaptic plasticity and learning and memory. This chain is Outer mitochondrial transmembrane helix translocase, found in Danio rerio (Zebrafish).